We begin with the raw amino-acid sequence, 140 residues long: MAREFSRTRRIAQQLQQELAQVLQRDIKDPRIGMVTVNDVDVSRDLNYAKVYVTFFEEDKAVVEEKLAALEAAAGYVRSLVAGRMKLRVMPEIRFIYDASLIEGMRMSNLVSQVITKDKAKAAEHGREDEELDDTEQDDK.

Residues 121–140 (KAAEHGREDEELDDTEQDDK) form a disordered region. Residues 129-140 (DEELDDTEQDDK) show a composition bias toward acidic residues.

It belongs to the RbfA family. Monomer. Binds 30S ribosomal subunits, but not 50S ribosomal subunits or 70S ribosomes.

The protein localises to the cytoplasm. Functionally, one of several proteins that assist in the late maturation steps of the functional core of the 30S ribosomal subunit. Associates with free 30S ribosomal subunits (but not with 30S subunits that are part of 70S ribosomes or polysomes). Required for efficient processing of 16S rRNA. May interact with the 5'-terminal helix region of 16S rRNA. In Shewanella loihica (strain ATCC BAA-1088 / PV-4), this protein is Ribosome-binding factor A.